The primary structure comprises 230 residues: Ribonuclease 3 (230 aa).

The region spanning 1-134 (MKQLEELLST…FLGALLLDKG (134 aa)) is the RNase III domain. E47 lines the Mg(2+) pocket. The active site involves D51. Positions 120 and 123 each coordinate Mg(2+). The active site involves E123. In terms of domain architecture, DRBM spans 160–229 (DYKTCLQEFL…AKNALAQLSE (70 aa)).

Belongs to the ribonuclease III family. Homodimer. Requires Mg(2+) as cofactor.

The protein localises to the cytoplasm. The catalysed reaction is Endonucleolytic cleavage to 5'-phosphomonoester.. Functionally, digests double-stranded RNA. Involved in the processing of primary rRNA transcript to yield the immediate precursors to the large and small rRNAs (23S and 16S). Processes some mRNAs, and tRNAs when they are encoded in the rRNA operon. Processes pre-crRNA and tracrRNA of type II CRISPR loci if present in the organism. The chain is Ribonuclease 3 from Streptococcus pyogenes serotype M3 (strain SSI-1).